Consider the following 532-residue polypeptide: Cocaine esterase (532 aa).

Pyrrolidone carboxylic acid is present on Gln1. Cys69 and Cys96 form a disulfide bridge. Ser201 acts as the Acyl-ester intermediate in catalysis. Asn249 carries N-linked (GlcNAc...) asparagine glycosylation. Cys253 and Cys264 form a disulfide bridge. Active-site charge relay system residues include Glu318 and His430. The Prevents secretion from ER motif lies at 529 to 532 (HTEL).

This sequence belongs to the type-B carboxylesterase/lipase family. Monomer.

The protein resides in the endoplasmic reticulum lumen. The enzyme catalyses a carboxylic ester + H2O = an alcohol + a carboxylate + H(+). It catalyses the reaction cocaine + H2O = ecgonine methyl ester + benzoate + H(+). The catalysed reaction is 2-(5Z,8Z,11Z,14Z-eicosatetraenoyl)-glycerol + H2O = glycerol + (5Z,8Z,11Z,14Z)-eicosatetraenoate + H(+). It carries out the reaction prostaglandin E2 1-glyceryl ester + H2O = prostaglandin E2 + glycerol + H(+). The enzyme catalyses prostaglandin F2alpha 1-glyceryl ester + H2O = prostaglandin F2alpha + glycerol + H(+). Functionally, involved in the detoxification of xenobiotics and in the activation of ester and amide prodrugs. Converts monoacylglycerides to free fatty acids and glycerol. Hydrolyzes of 2-arachidonoylglycerol and prostaglandins. The protein is Cocaine esterase (CES2) of Oryctolagus cuniculus (Rabbit).